The primary structure comprises 386 residues: MIILFIHASDFSFNVKERAIKEPEEAKLKSIELKNTLVCFTTVEKGDDEEILSKAIDDILDVYSKVKADSVVIYPYAHLSSNLANPDTAIKILESLENLLKDKVKVYRAPFGWYKAFSISCYGHPLSELSRRIRKTEELEKSEELKYCEKFGFPSSSESAFMRRATIGYLRNLFQPLFESENNENVRDGEMSILYQNVESGRILPCINENPRIVVVYGGVRELNFPKEINDSKNRIRVWWVNESKIYVDVGRLIYYFILESVKQQPPTLPDWLNPIQVRLLPVKKDFLDFSIQVAERLRKEGIRVNIDDLDDSLGNKIRRAGTDWIPFVIVIGEREVKTNTLTVKIRARNEQKSMTVEELVKEIKDEVKERQNLPLYYTLYRHKNN.

Belongs to the class-II aminoacyl-tRNA synthetase family. Archaea-specific ThrRS editing domain subfamily. In terms of assembly, probably interacts with its catalytic subunit (AC Q97VW8); a subunit fusion (in the order edit-catalytic) is fully functional.

The protein localises to the cytoplasm. Functionally, freestanding tRNA editing subunit of threonine--tRNA ligase, the catalytic subunit is AC Q97VW8. Deacylates (edits) mischarged L-seryl-tRNA(Thr) in trans, removing L-serine, has no aminoacylation activity. In vitro when both subunits are present, or if the 2 subunits are fused, L-seryl-tRNA(Thr) is no longer produced. Has no activity on correctly acylated L-seryl-tRNA(Ser) or L-threonyl-tRNA(Thr). Editing is probably catalyzed by the 2'-OH of A76 of tRNA(Thr). The chain is Threonine--tRNA ligase editing subunit from Saccharolobus solfataricus (strain ATCC 35092 / DSM 1617 / JCM 11322 / P2) (Sulfolobus solfataricus).